A 209-amino-acid chain; its full sequence is 8-oxoguanine DNA glycosylase/AP lyase (209 aa).

Catalysis depends on residues Lys132 and Asp150.

It belongs to the type-2 OGG1 family.

It carries out the reaction 2'-deoxyribonucleotide-(2'-deoxyribose 5'-phosphate)-2'-deoxyribonucleotide-DNA = a 3'-end 2'-deoxyribonucleotide-(2,3-dehydro-2,3-deoxyribose 5'-phosphate)-DNA + a 5'-end 5'-phospho-2'-deoxyribonucleoside-DNA + H(+). In terms of biological role, catalyzes the excision of an oxidatively damaged form of guanine (7,8-dihydro-8-oxoguanine = 8-oxoG) from DNA. Also cleaves the DNA backbone at apurinic/apyrimidinic sites (AP sites). The chain is 8-oxoguanine DNA glycosylase/AP lyase from Picrophilus torridus (strain ATCC 700027 / DSM 9790 / JCM 10055 / NBRC 100828 / KAW 2/3).